We begin with the raw amino-acid sequence, 673 residues long: Annexin A6 (673 aa).

Alanine 2 bears the N-acetylalanine mark. A Phosphoserine modification is found at serine 13. Annexin repeat units follow at residues 20–91 (FNPS…GLMR), 92–163 (PPAY…VLLQ), 175–247 (DLVQ…AVVK), 251–322 (STAE…KLCG), 363–434 (FNPD…GLMM), 435–506 (PPAH…SLAT), 521–595 (EDAQ…AIVQ), and 599–670 (NKPL…AICG). At tyrosine 30 the chain carries Phosphotyrosine. An N6-acetyllysine mark is found at lysine 63, lysine 68, lysine 75, and lysine 81. Tyrosine 201 carries the post-translational modification Phosphotyrosine. An N6-acetyllysine mark is found at lysine 306, lysine 370, and lysine 418. Serine 422 carries the phosphoserine modification. Lysine 483 carries the N6-acetyllysine modification. Residue serine 537 is modified to Phosphoserine. Lysine 620 is modified (N6-acetyllysine).

It belongs to the annexin family. Post-translationally, phosphorylated in response to growth factor stimulation.

The protein localises to the cytoplasm. It is found in the melanosome. Its function is as follows. May associate with CD21. May regulate the release of Ca(2+) from intracellular stores. The sequence is that of Annexin A6 (ANXA6) from Bos taurus (Bovine).